Reading from the N-terminus, the 494-residue chain is Guanosine-5'-triphosphate,3'-diphosphate pyrophosphatase (494 aa).

This sequence belongs to the GppA/Ppx family. GppA subfamily.

It catalyses the reaction guanosine 3'-diphosphate 5'-triphosphate + H2O = guanosine 3',5'-bis(diphosphate) + phosphate + H(+). It functions in the pathway purine metabolism; ppGpp biosynthesis; ppGpp from GTP: step 2/2. Catalyzes the conversion of pppGpp to ppGpp. Guanosine pentaphosphate (pppGpp) is a cytoplasmic signaling molecule which together with ppGpp controls the 'stringent response', an adaptive process that allows bacteria to respond to amino acid starvation, resulting in the coordinated regulation of numerous cellular activities. The polypeptide is Guanosine-5'-triphosphate,3'-diphosphate pyrophosphatase (Escherichia coli O127:H6 (strain E2348/69 / EPEC)).